A 130-amino-acid polypeptide reads, in one-letter code: MTTVLLDSHVAYWWSAEPQRLSMAASQAIEHADELAVAAISWFELAWLAEQERIQLAIPVLSWLQQLAEHVRTVGITPSVAATAVALPSSFPGDPADRLIYATAIEHGWRLVTKDRRLRSHRHPRPVTVW.

The PINc domain maps to 4–119 (VLLDSHVAYW…RLVTKDRRLR (116 aa)). Mg(2+)-binding residues include D7 and D97.

The protein belongs to the PINc/VapC protein family. The cofactor is Mg(2+).

It is found in the secreted. Functionally, toxic component of a type II toxin-antitoxin (TA) system. An RNase. Upon expression in M.smegmatis inhibits translation and colony formation. Its toxic effect on colony formation is neutralized by coexpression with cognate antitoxin VapB22; the effect on translation has not been tested but is probably neutralized also. The sequence is that of Ribonuclease VapC22 from Mycobacterium tuberculosis (strain ATCC 25618 / H37Rv).